The sequence spans 481 residues: Zinc metalloproteinase/disintegrin (481 aa).

The N-terminal stretch at 1–20 is a signal peptide; it reads MIQVLLVTICLAVFPYQGSS. A propeptide spanning residues 21 to 190 is cleaved from the precursor; sequence IILESGNVDD…KASQLYLTPE (170 aa). In terms of domain architecture, Peptidase M12B spans 197 to 392; the sequence is RYIKLAIVVD…DNPQCILNAP (196 aa). 3 disulfide bridges follow: C308–C387, C349–C371, and C351–C354. Residue H333 participates in Zn(2+) binding. The active site involves E334. The Zn(2+) site is built by H337 and H343. Residues 393-408 constitute a propeptide that is removed on maturation; sequence LRTDTVSTPVSGNEFL. In terms of domain architecture, Disintegrin spans 400-481; the sequence is TPVSGNEFLE…GDCPRNPFHA (82 aa). 6 cysteine pairs are disulfide-bonded: C414–C429, C416–C424, C423–C446, C437–C443, C442–C467, and C455–C474. A Cell attachment site motif is present at residues 459–461; it reads RGD.

Belongs to the venom metalloproteinase (M12B) family. P-II subfamily. P-IIa sub-subfamily. In terms of assembly, monomer. It depends on Zn(2+) as a cofactor. In terms of tissue distribution, expressed by the venom gland.

It localises to the secreted. Functionally, impairs hemostasis in the envenomed animal. In terms of biological role, disintegrin elegantin-2a-f: inhibits platelet aggregation induced by ADP, thrombin, platelet-activating factor and collagen. Acts by inhibiting fibrinogen interaction with platelet receptors GPIIb/GPIIIa (ITGA2B/ITGB3). The protein is Zinc metalloproteinase/disintegrin of Protobothrops elegans (Elegant pitviper).